A 110-amino-acid polypeptide reads, in one-letter code: uncharacterized protein (110 aa).

The next 2 membrane-spanning stretches (helical) occupy residues 6–26 (VSLY…IYNV) and 38–58 (TSGP…IIGP).

The protein localises to the membrane. This is an uncharacterized protein from Saccharomyces cerevisiae (strain ATCC 204508 / S288c) (Baker's yeast).